A 337-amino-acid chain; its full sequence is RAD51-associated protein 1 (337 aa).

Disordered regions lie at residues 1 to 69 and 88 to 337; these read MVRP…PPKK and LSVK…SQVR. Ser-19 and Ser-23 each carry phosphoserine. The span at 28–38 shows a compositional bias: polar residues; the sequence is ISSSTPVNKSK. The tract at residues 32–50 is interaction with DNA; that stretch reads TPVNKSKTVPKVLKQDKPK. Basic and acidic residues predominate over residues 44–69; sequence LKQDKPKPNLKNLQKEEVLPTEPPKK. A phosphoserine mark is found at Ser-103 and Ser-107. Over residues 105–118 the composition is skewed to basic and acidic residues; that stretch reads EKSTDKQGKEKTEN. The SIM motif motif lies at 138–143; sequence LDKITE. Residues 190–205 show a composition bias toward acidic residues; that stretch reads SESDPDFDESKESDED. Residues 225–286 form an interaction with DNA region; it reads GEKKERKSKP…PSAESKRPKW (62 aa). Residue Lys-251 forms a Glycyl lysine isopeptide (Lys-Gly) (interchain with G-Cter in SUMO; alternate) linkage. A Glycyl lysine isopeptide (Lys-Gly) (interchain with G-Cter in ubiquitin; alternate) cross-link involves residue Lys-251. The WVPP motif signature appears at 286–289; sequence WVPP. Positions 290-304 are enriched in low complexity; sequence AASGSRNSSSNALAG. Positions 295–334 are interaction with RAD51; that stretch reads RNSSSNALAGTPAKSPSQSLRLGLSRLAPVKRLHPSATSS. Ser-309 carries the post-translational modification Phosphoserine.

Monomer; elongated monodisperse monomer. Interacts (via C-terminal region) with RAD51; the interaction is direct. Interacts (via SIM motif) with WDR48/UAF1; WDR48/UAF1 and RAD51AP1 cooperate together to stimulate RAD51-mediated homologous recombination (HR). Interacts (via WVPP motif) with DMC1; the interaction is direct. Interacts with PALB2. Interacts with RAD52. In terms of processing, sumoylation with SUMO2/3 by NSMCE2/MMS21 promotes stabilization, possibly by preventing ubiquitination. As to expression, most abundantly expressed in testis. Also expressed in spleen, thymus and bone marrow. Not detected in heart, kidney or liver.

It is found in the chromosome. It localises to the nucleus. The protein localises to the telomere. Structure-specific DNA-binding protein involved in DNA repair by promoting RAD51-mediated homologous recombination. Acts by stimulating D-Loop formation by RAD51: specifically enhances joint molecule formation through its structure-specific DNA interaction and its interaction with RAD51. Binds single-stranded DNA (ssDNA), double-stranded DNA (dsDNA) and secondary DNA structures, such as D-loop structures: has a strong preference for branched-DNA structures that are obligatory intermediates during joint molecule formation. Cooperates with WDR48/UAF1 to stimulate RAD51-mediated homologous recombination: both WDR48/UAF1 and RAD51AP1 have coordinated role in DNA-binding during homologous recombination and DNA repair. WDR48/UAF1 and RAD51AP1 also have a coordinated role in DNA-binding to promote USP1-mediated deubiquitination of FANCD2. Also involved in meiosis by promoting DMC1-mediated homologous meiotic recombination. The sequence is that of RAD51-associated protein 1 from Mus musculus (Mouse).